The sequence spans 438 residues: Flagellum-specific ATP synthase (438 aa).

Residues 119 to 139 form a disordered region; sequence GLSPVSTEQSPPNPMKRPPIR. Residue 165–172 participates in ATP binding; it reads AGSGVGKS.

The protein belongs to the ATPase alpha/beta chains family.

The protein resides in the cytoplasm. It carries out the reaction ATP + H2O + 4 H(+)(in) = ADP + phosphate + 5 H(+)(out). Its function is as follows. Probable catalytic subunit of a protein translocase for flagellum-specific export, or a proton translocase involved in local circuits at the flagellum. This is Flagellum-specific ATP synthase (fliI) from Bacillus subtilis (strain 168).